We begin with the raw amino-acid sequence, 555 residues long: CTP synthase (555 aa).

The interval 1–267 is amidoligase domain; the sequence is MTKFVFVTGG…AQQVLKFMHL (267 aa). CTP is bound at residue Ser13. UTP is bound at residue Ser13. ATP contacts are provided by residues 14–19 and Asp71; that span reads SIGKGI. Residues Asp71 and Glu141 each contribute to the Mg(2+) site. CTP contacts are provided by residues 148-150, 188-193, and Lys224; these read DIE and KTKPTQ. UTP contacts are provided by residues 188-193 and Lys224; that span reads KTKPTQ. Residue Ala242 participates in ATP binding. Positions 299–535 constitute a Glutamine amidotransferase type-1 domain; it reads YVQLSDAYLS…VGACLADNGN (237 aa). Gly354 is a binding site for L-glutamine. Cys381 acts as the Nucleophile; for glutamine hydrolysis in catalysis. Residues 382-385, Glu405, and Arg463 each bind L-glutamine; that span reads LGMQ. Residues His508 and Glu510 contribute to the active site. The interval 536–555 is disordered; sequence NANHHDSTPAEPLVSEPLSS.

The protein belongs to the CTP synthase family. As to quaternary structure, homotetramer.

The enzyme catalyses UTP + L-glutamine + ATP + H2O = CTP + L-glutamate + ADP + phosphate + 2 H(+). The catalysed reaction is L-glutamine + H2O = L-glutamate + NH4(+). It carries out the reaction UTP + NH4(+) + ATP = CTP + ADP + phosphate + 2 H(+). It functions in the pathway pyrimidine metabolism; CTP biosynthesis via de novo pathway; CTP from UDP: step 2/2. Its activity is regulated as follows. Allosterically activated by GTP, when glutamine is the substrate; GTP has no effect on the reaction when ammonia is the substrate. The allosteric effector GTP functions by stabilizing the protein conformation that binds the tetrahedral intermediate(s) formed during glutamine hydrolysis. Inhibited by the product CTP, via allosteric rather than competitive inhibition. Its function is as follows. Catalyzes the ATP-dependent amination of UTP to CTP with either L-glutamine or ammonia as the source of nitrogen. Regulates intracellular CTP levels through interactions with the four ribonucleotide triphosphates. The sequence is that of CTP synthase from Acaryochloris marina (strain MBIC 11017).